A 290-amino-acid polypeptide reads, in one-letter code: 4-hydroxy-tetrahydrodipicolinate synthase (290 aa).

Ser44 is a binding site for pyruvate. Tyr132 serves as the catalytic Proton donor/acceptor. The active-site Schiff-base intermediate with substrate is the Lys161. Val202 contacts pyruvate.

The protein belongs to the DapA family. Homotetramer; dimer of dimers.

The protein localises to the cytoplasm. The catalysed reaction is L-aspartate 4-semialdehyde + pyruvate = (2S,4S)-4-hydroxy-2,3,4,5-tetrahydrodipicolinate + H2O + H(+). It functions in the pathway amino-acid biosynthesis; L-lysine biosynthesis via DAP pathway; (S)-tetrahydrodipicolinate from L-aspartate: step 3/4. Its function is as follows. Catalyzes the condensation of (S)-aspartate-beta-semialdehyde [(S)-ASA] and pyruvate to 4-hydroxy-tetrahydrodipicolinate (HTPA). This chain is 4-hydroxy-tetrahydrodipicolinate synthase, found in Hydrogenobaculum sp. (strain Y04AAS1).